A 519-amino-acid polypeptide reads, in one-letter code: Aldehyde dehydrogenase X, mitochondrial (519 aa).

A mitochondrion-targeting transit peptide spans 1 to 19 (MLNARFLVPRLLCLQGRTT). K53 is modified (N6-acetyllysine). The residue at position 54 (K54) is an N6-acetyllysine; alternate. K54 is modified (N6-succinyllysine; alternate). 264 to 269 (GSTEVG) serves as a coordination point for NAD(+). The active-site Proton acceptor is the E287. C321 serves as the catalytic Nucleophile. An N6-acetyllysine; alternate mark is found at K366, K385, K401, and K428. Residues K366, K385, K401, and K428 each carry the N6-succinyllysine; alternate modification. K431 carries the post-translational modification N6-acetyllysine.

It belongs to the aldehyde dehydrogenase family. As to quaternary structure, homotetramer.

The protein localises to the mitochondrion matrix. The enzyme catalyses an aldehyde + NAD(+) + H2O = a carboxylate + NADH + 2 H(+). Its pathway is alcohol metabolism; ethanol degradation; acetate from ethanol: step 2/2. ALDHs play a major role in the detoxification of alcohol-derived acetaldehyde. They are involved in the metabolism of corticosteroids, biogenic amines, neurotransmitters, and lipid peroxidation. In Rattus norvegicus (Rat), this protein is Aldehyde dehydrogenase X, mitochondrial (Aldh1b1).